Reading from the N-terminus, the 452-residue chain is Trigger factor (452 aa).

The region spanning 162–247 (GDTVTIDYKG…IHEVKSKQLP (86 aa)) is the PPIase FKBP-type domain. Residues 427 to 452 (AKAKLEAKEAEEAEDKEEAEDKKENK) form a disordered region.

Belongs to the FKBP-type PPIase family. Tig subfamily.

It is found in the cytoplasm. It catalyses the reaction [protein]-peptidylproline (omega=180) = [protein]-peptidylproline (omega=0). Its function is as follows. Involved in protein export. Acts as a chaperone by maintaining the newly synthesized protein in an open conformation. Functions as a peptidyl-prolyl cis-trans isomerase. The polypeptide is Trigger factor (Lactobacillus helveticus (strain DPC 4571)).